A 104-amino-acid polypeptide reads, in one-letter code: Large ribosomal subunit protein uL24 (104 aa).

The protein belongs to the universal ribosomal protein uL24 family. As to quaternary structure, part of the 50S ribosomal subunit.

In terms of biological role, one of two assembly initiator proteins, it binds directly to the 5'-end of the 23S rRNA, where it nucleates assembly of the 50S subunit. Its function is as follows. One of the proteins that surrounds the polypeptide exit tunnel on the outside of the subunit. This is Large ribosomal subunit protein uL24 from Chelativorans sp. (strain BNC1).